A 349-amino-acid chain; its full sequence is tRNA pseudouridine synthase D (349 aa).

Residue Phe-27 participates in substrate binding. Asp-80 acts as the Nucleophile in catalysis. Residue Asn-129 coordinates substrate. The region spanning 155–303 is the TRUD domain; sequence GVPNYFGPQR…VEAARRAMLL (149 aa). Phe-329 serves as a coordination point for substrate.

The protein belongs to the pseudouridine synthase TruD family.

It carries out the reaction uridine(13) in tRNA = pseudouridine(13) in tRNA. In terms of biological role, responsible for synthesis of pseudouridine from uracil-13 in transfer RNAs. The sequence is that of tRNA pseudouridine synthase D from Cronobacter sakazakii (strain ATCC BAA-894) (Enterobacter sakazakii).